The chain runs to 606 residues: MKSLNVILTLLSLIISVLSKKVYYEAEDGKLNGITVFKELSGFSGKGYVGRFENPGNSVTVTVDAPATGMYDLSIIYCANMGQKINSLTVNDQSVGDITFTENTKFETKDVGAVYLNKGKNTIGLVSSWGWMWVDAFVINDAPNAAKDVSSKLNPTLVNPKAIPAAKKLYDFLKTNYGKRILSGQVGAAGQAGDEGQEIQRIQKATGKLPAVWNMDFIFESNDCTWRPQNPDITEMAINWWKKYEGKGIMAAQWHWNIAGKTGDFAFYSKDTTFNLENAVTEGTWEYEKIIKDIDRVSGHIKKLQAVNMPLIWRPLHENNGDWFWWGNNPKACAKLWKILYERMVNYHGLNNLIWLWNGNNDANTPVDYIDIIGVDIYANDHGPQTTAYNTHFDFYGGKKMVVLSENGRIPDIQQCVDQDVWWGYFQTWNSEFILQDSYHTDAQLKEYFNHKTVMNMDELPSFNVDSYNGDSGSSHNGNSESNSNTGNSDECWSINLGYPCCIGDYVVTTDENGDWGVENNEWCGIVHKSCWSEPLGYPCCVGNTVISADESGDWGVENNEWCGIVHKSCWAEFLGYPCCVGNTVISTDEFGDWGVENDDWCGILN.

The signal sequence occupies residues 1–19 (MKSLNVILTLLSLIISVLS). The region spanning 22 to 140 (VYYEAEDGKL…WMWVDAFVIN (119 aa)) is the CBM6 domain. The 295-residue stretch at 164-458 (PAAKKLYDFL…FNHKTVMNMD (295 aa)) folds into the GH26 domain. Position 285 (tryptophan 285) interacts with substrate. The active-site Proton donor is the glutamate 318. Positions 323 and 378 each coordinate substrate. Glutamate 406 acts as the Nucleophile in catalysis. The tract at residues 472–489 (SGSSHNGNSESNSNTGNS) is linker. CBM10 domains follow at residues 491–527 (ECWS…CGIV), 530–566 (SCWS…CGIV), and 569–605 (SCWA…CGIL). Tryptophan 493 provides a ligand contact to substrate.

The protein belongs to the glycosyl hydrolase 26 family.

It carries out the reaction Random hydrolysis of (1-&gt;4)-beta-D-mannosidic linkages in mannans, galactomannans and glucomannans.. Hydrolyzes 1,4-beta linked polysaccharide backbones of mannans, one of the major hemicellulose components in hardwoods and softwoods. Shows very high activity against mannohexaose but not against mannopentaose and smaller mannooligosaccharides. The major products released from mannooligosaccharide hydrolysis are mannose and mannobiose. The reiterated 40 AA domain is involved in binding the cellulase-hemicellulase complex. The sequence is that of Mannan endo-1,4-beta-mannosidase A (MANA) from Piromyces sp.